We begin with the raw amino-acid sequence, 315 residues long: Acetyl-coenzyme A carboxylase carboxyl transferase subunit alpha (315 aa).

Positions 39 to 293 (RLQDKSSTLT…RADLIEQLDM (255 aa)) constitute a CoA carboxyltransferase C-terminal domain.

This sequence belongs to the AccA family. Acetyl-CoA carboxylase is a heterohexamer composed of biotin carboxyl carrier protein (AccB), biotin carboxylase (AccC) and two subunits each of ACCase subunit alpha (AccA) and ACCase subunit beta (AccD).

It is found in the cytoplasm. The catalysed reaction is N(6)-carboxybiotinyl-L-lysyl-[protein] + acetyl-CoA = N(6)-biotinyl-L-lysyl-[protein] + malonyl-CoA. Its pathway is lipid metabolism; malonyl-CoA biosynthesis; malonyl-CoA from acetyl-CoA: step 1/1. Component of the acetyl coenzyme A carboxylase (ACC) complex. First, biotin carboxylase catalyzes the carboxylation of biotin on its carrier protein (BCCP) and then the CO(2) group is transferred by the carboxyltransferase to acetyl-CoA to form malonyl-CoA. The sequence is that of Acetyl-coenzyme A carboxylase carboxyl transferase subunit alpha from Pseudomonas entomophila (strain L48).